The primary structure comprises 362 residues: MHSFASLLAYGLAASATLASASPIEARGSCTFKTAAAAKAGKAGCSTITLDNIEVPAGTTLDLTGLTSGTKVIFEGTTTFDYEEWAGPLISMSGKDITVTGASGHLINCDGARWWDGKGTSGKKKPKFFYAHGLDSSSITGLNIKNTPLMAFSVQADDITLTDITINNADGDTLGGHNTDAFDVGNSVGVNIIKPWVHNQDDCLAINSGENIWFTSGTCIGGHGLSIGSVGGRSNNVVKNVTIEHSTVSNSENAVRIKTVSGATGSVSEITYSNIVMSGISDYGVVIQQDYEDGKPTGKPTNGVTITDVKLESVTGTVDSKATDIYLLCGSGSCSDWTWDDVKVTGGKKSTACKNYPSVASC.

A signal peptide spans 1–21; the sequence is MHSFASLLAYGLAASATLASA. A propeptide spanning residues 22-27 is cleaved from the precursor; that stretch reads SPIEAR. A disulfide bridge connects residues Cys30 and Cys45. One copy of the PbH1 1 repeat lies at 156–186; the sequence is ADDITLTDITINNADGDTLGGHNTDAFDVGN. The Proton donor role is filled by Asp201. Cys203 and Cys219 are joined by a disulfide. His223 is an active-site residue. PbH1 repeat units lie at residues 238-259, 267-289, and 301-322; these read VKNVTIEHSTVSNSENAVRIKT, VSEITYSNIVMSGISDYGVVIQQ, and TNGVTITDVKLESVTGTVDSKA. Asn240 is a glycosylation site (N-linked (GlcNAc...) (high mannose) asparagine). 2 disulfide bridges follow: Cys329–Cys334 and Cys353–Cys362.

It belongs to the glycosyl hydrolase 28 family.

Its subcellular location is the secreted. The enzyme catalyses (1,4-alpha-D-galacturonosyl)n+m + H2O = (1,4-alpha-D-galacturonosyl)n + (1,4-alpha-D-galacturonosyl)m.. In terms of biological role, involved in maceration and soft-rotting of plant tissue. Hydrolyzes the 1,4-alpha glycosidic bonds of de-esterified pectate in the smooth region of the plant cell wall. The protein is Endopolygalacturonase II of Aspergillus niger.